The primary structure comprises 327 residues: Elongation factor P--(R)-beta-lysine ligase (327 aa).

78–80 is a substrate binding site; that stretch reads SPE. ATP-binding positions include 102–104 and Asn111; that span reads RNQ. Residue Tyr120 participates in substrate binding. 246–247 provides a ligand contact to ATP; the sequence is EL. Glu253 contributes to the substrate binding site. ATP is bound at residue Gly302.

The protein belongs to the class-II aminoacyl-tRNA synthetase family. EpmA subfamily. As to quaternary structure, homodimer.

It catalyses the reaction D-beta-lysine + L-lysyl-[protein] + ATP = N(6)-((3R)-3,6-diaminohexanoyl)-L-lysyl-[protein] + AMP + diphosphate + H(+). Functionally, with EpmB is involved in the beta-lysylation step of the post-translational modification of translation elongation factor P (EF-P). Catalyzes the ATP-dependent activation of (R)-beta-lysine produced by EpmB, forming a lysyl-adenylate, from which the beta-lysyl moiety is then transferred to the epsilon-amino group of a conserved specific lysine residue in EF-P. The sequence is that of Elongation factor P--(R)-beta-lysine ligase from Baumannia cicadellinicola subsp. Homalodisca coagulata.